A 268-amino-acid chain; its full sequence is Tryptophan synthase alpha chain (268 aa).

Catalysis depends on proton acceptor residues Glu-49 and Asp-60.

It belongs to the TrpA family. As to quaternary structure, tetramer of two alpha and two beta chains.

It carries out the reaction (1S,2R)-1-C-(indol-3-yl)glycerol 3-phosphate + L-serine = D-glyceraldehyde 3-phosphate + L-tryptophan + H2O. It participates in amino-acid biosynthesis; L-tryptophan biosynthesis; L-tryptophan from chorismate: step 5/5. Its function is as follows. The alpha subunit is responsible for the aldol cleavage of indoleglycerol phosphate to indole and glyceraldehyde 3-phosphate. The sequence is that of Tryptophan synthase alpha chain from Dechloromonas aromatica (strain RCB).